A 195-amino-acid chain; its full sequence is Segregation and condensation protein B (195 aa).

It belongs to the ScpB family. Homodimer. Homodimerization may be required to stabilize the binding of ScpA to the Smc head domains. Component of a cohesin-like complex composed of ScpA, ScpB and the Smc homodimer, in which ScpA and ScpB bind to the head domain of Smc. The presence of the three proteins is required for the association of the complex with DNA.

The protein resides in the cytoplasm. Its function is as follows. Participates in chromosomal partition during cell division. May act via the formation of a condensin-like complex containing Smc and ScpA that pull DNA away from mid-cell into both cell halves. The polypeptide is Segregation and condensation protein B (Clostridium perfringens (strain ATCC 13124 / DSM 756 / JCM 1290 / NCIMB 6125 / NCTC 8237 / Type A)).